The sequence spans 1074 residues: Chitin synthase 2 (1074 aa).

3 disordered regions span residues 1–32 (MSHY…AHSG), 56–179 (QAAP…PSQH), and 209–255 (RSDS…PYNN). Residues 19–29 (DQQQPYYTDQA) are compositionally biased toward polar residues. Positions 68–80 (RIRSNSSGSRSVS) are enriched in low complexity. N-linked (GlcNAc...) asparagine glycosylation is found at Asn-72 and Asn-97. Residues 85–119 (AYTNQGIPPVPSNLSAARQRSDPSQALPPSSSSYA) are compositionally biased toward polar residues. Residues 129–143 (SSHRNAPNAPNSNHP) show a composition bias toward low complexity. N-linked (GlcNAc...) asparagine glycosylation is present at Asn-149. The N-linked (GlcNAc...) asparagine glycan is linked to Asn-289. 8 helical membrane passes run 608–628 (VFGF…KALL), 742–762 (LVLL…FYFL), 779–799 (GAAI…VVLV), 817–837 (IIIF…TIYL), 867–887 (IVIS…LHLE), 891–911 (MLTS…ILSM), 1001–1021 (LVLI…STWW), and 1048–1068 (IFWS…TFLL).

This sequence belongs to the chitin synthase family. Class II subfamily.

The protein resides in the cell membrane. The protein localises to the cytoplasmic vesicle membrane. The catalysed reaction is [(1-&gt;4)-N-acetyl-beta-D-glucosaminyl](n) + UDP-N-acetyl-alpha-D-glucosamine = [(1-&gt;4)-N-acetyl-beta-D-glucosaminyl](n+1) + UDP + H(+). Polymerizes chitin, a structural polymer of the cell wall and septum, by transferring the sugar moiety of UDP-GlcNAc to the non-reducing end of the growing chitin polymer. The sequence is that of Chitin synthase 2 (CHS2) from Mycosarcoma maydis (Corn smut fungus).